Consider the following 78-residue polypeptide: MAAGVKAAELRELSEEELVTKLREAKAELFNLRVQAATGQLDNNRRLQVIRREIARIYTIMRERELGLSAAPTEVTAG.

The protein belongs to the universal ribosomal protein uL29 family.

In Salinispora arenicola (strain CNS-205), this protein is Large ribosomal subunit protein uL29.